The following is a 445-amino-acid chain: uncharacterized protein (445 aa).

This is an uncharacterized protein from Acanthamoeba polyphaga mimivirus (APMV).